Consider the following 587-residue polypeptide: Putative phagocytic receptor 1b (587 aa).

The N-terminal stretch at 1–23 is a signal peptide; the sequence is MRLQILLIYLICIIVSSIVLVES. A run of 9 helical transmembrane segments spans residues 223–243, 294–314, 319–339, 354–374, 390–410, 448–468, 480–500, 524–544, and 556–576; these read LSVM…AIMI, IGWQ…FGMF, GGNM…ISGY, AWNI…VVIL, ILTM…LTVV, ILIA…YIFN, GILC…TVAL, VVFI…MYGL, and IVCF…SLIF.

This sequence belongs to the nonaspanin (TM9SF) (TC 9.A.2) family.

It localises to the membrane. Involved in adhesion and phagocytosis of hydrophilic particles. This is Putative phagocytic receptor 1b (phg1b) from Dictyostelium discoideum (Social amoeba).